Consider the following 286-residue polypeptide: MMPEFEKNTVHIRDPERVEQIICGLIKGGASKLQIITDFDMTLSRFAVNGKRCPSCHNIIDNSKLVTDDCRKKLVHLKETYYPIEIDPHLTMEEKYPFMVEWYFKSHTLLVEQRLEKDKLPEAVRESDVSLKEGYEQFFDRLHQHSVPVFIFSAGLGDVLEEIIRQAGVYHPNVKVVSNFMDFDDNGVLKGFKGELIHVYNKHDGALRNTEYFKQLKDNGNIILLGDSLGDLTMADGVPNVENILKIGYLNDKVEELLEKYMDSYNIVLARDETLEVPNSILQKIL.

Catalysis depends on Asp-38, which acts as the Nucleophile. Residues Asp-38 and Asp-40 each contribute to the Mg(2+) site. Asp-40 acts as the Proton donor in catalysis. Substrate-binding positions include Glu-85, Ser-106, 153–154 (SA), and Lys-202. Asp-227 lines the Mg(2+) pocket.

The protein belongs to the pyrimidine 5'-nucleotidase family.

It localises to the cytoplasm. The enzyme catalyses a ribonucleoside 5'-phosphate + H2O = a ribonucleoside + phosphate. In terms of biological role, can act both as nucleotidase and as phosphotransferase. The sequence is that of Cytosolic 5'-nucleotidase 3 (nt5c3) from Danio rerio (Zebrafish).